A 173-amino-acid chain; its full sequence is Peptide deformylase (173 aa).

Residues cysteine 91 and histidine 133 each contribute to the Fe cation site. Residue glutamate 134 is part of the active site. A Fe cation-binding site is contributed by histidine 137.

This sequence belongs to the polypeptide deformylase family. Fe(2+) serves as cofactor.

The catalysed reaction is N-terminal N-formyl-L-methionyl-[peptide] + H2O = N-terminal L-methionyl-[peptide] + formate. In terms of biological role, removes the formyl group from the N-terminal Met of newly synthesized proteins. Requires at least a dipeptide for an efficient rate of reaction. N-terminal L-methionine is a prerequisite for activity but the enzyme has broad specificity at other positions. The chain is Peptide deformylase from Blochmanniella pennsylvanica (strain BPEN).